Consider the following 450-residue polypeptide: UDP-N-acetylmuramoylalanine--D-glutamate ligase (450 aa).

119 to 125 provides a ligand contact to ATP; sequence GSNGKTT.

Belongs to the MurCDEF family.

Its subcellular location is the cytoplasm. It carries out the reaction UDP-N-acetyl-alpha-D-muramoyl-L-alanine + D-glutamate + ATP = UDP-N-acetyl-alpha-D-muramoyl-L-alanyl-D-glutamate + ADP + phosphate + H(+). The protein operates within cell wall biogenesis; peptidoglycan biosynthesis. Functionally, cell wall formation. Catalyzes the addition of glutamate to the nucleotide precursor UDP-N-acetylmuramoyl-L-alanine (UMA). The sequence is that of UDP-N-acetylmuramoylalanine--D-glutamate ligase from Streptococcus gordonii (strain Challis / ATCC 35105 / BCRC 15272 / CH1 / DL1 / V288).